Reading from the N-terminus, the 173-residue chain is Alpha-crystallin A chain (173 aa).

Methionine 1 is modified (N-acetylmethionine). Positions 1–63 are required for complex formation with BFSP1 and BFSP2; it reads MDIAIQHPWF…RSVLDSGVSE (63 aa). Glutamine 6 is subject to Deamidated glutamine; partial. Serine 45 is subject to Phosphoserine. Position 50 is a deamidated glutamine; partial (glutamine 50). Positions 52-162 constitute a sHSP domain; that stretch reads LFRSVLDSGV…GHSERAIPVS (111 aa). Position 70 is an N6-acetyllysine (lysine 70). Position 90 is a deamidated glutamine; partial (glutamine 90). An N6-acetyllysine modification is found at lysine 99. Residue histidine 100 coordinates Zn(2+). Residue asparagine 101 is modified to Deamidated asparagine; partial. Zn(2+) is bound by residues glutamate 102 and histidine 107. Position 122 is a phosphoserine (serine 122). Residue asparagine 123 is modified to Deamidated asparagine; partial. A disordered region spans residues 144–173; that stretch reads PKIPSGMDAGHSERAIPVSREEKPSSAPSS. Residues 153 to 167 are compositionally biased toward basic and acidic residues; it reads GHSERAIPVSREEKP. Histidine 154 contributes to the Zn(2+) binding site. Serine 162 is a glycosylation site (O-linked (GlcNAc) serine).

It belongs to the small heat shock protein (HSP20) family. Heteromer composed of three CRYAA and one CRYAB subunits. Inter-subunit bridging via zinc ions enhances stability, which is crucial as there is no protein turn over in the lens. Can also form homodimers and homotetramers (dimers of dimers) which serve as the building blocks of homooligomers. Within homooligomers, the zinc-binding motif is created from residues of 3 different molecules. His-100 and Glu-102 from one molecule are ligands of the zinc ion, and His-107 and His-154 residues from additional molecules complete the site with tetrahedral coordination geometry. Part of a complex required for lens intermediate filament formation composed of BFSP1, BFSP2 and CRYAA. Acetylation at Lys-70 may increase chaperone activity. In terms of processing, undergoes age-dependent proteolytical cleavage at the C-terminus.

It localises to the cytoplasm. The protein localises to the nucleus. Functionally, contributes to the transparency and refractive index of the lens. Acts as a chaperone, preventing aggregation of various proteins under a wide range of stress conditions. Required for the correct formation of lens intermediate filaments as part of a complex composed of BFSP1, BFSP2 and CRYAA. This Ceratotherium simum (White rhinoceros) protein is Alpha-crystallin A chain (CRYAA).